A 128-amino-acid chain; its full sequence is Transcription antitermination protein NusB (128 aa).

Belongs to the NusB family.

Involved in transcription antitermination. Required for transcription of ribosomal RNA (rRNA) genes. Binds specifically to the boxA antiterminator sequence of the ribosomal RNA (rrn) operons. In Staphylococcus haemolyticus (strain JCSC1435), this protein is Transcription antitermination protein NusB.